Reading from the N-terminus, the 272-residue chain is Indole-3-glycerol phosphate synthase (272 aa).

This sequence belongs to the TrpC family.

The catalysed reaction is 1-(2-carboxyphenylamino)-1-deoxy-D-ribulose 5-phosphate + H(+) = (1S,2R)-1-C-(indol-3-yl)glycerol 3-phosphate + CO2 + H2O. The protein operates within amino-acid biosynthesis; L-tryptophan biosynthesis; L-tryptophan from chorismate: step 4/5. The protein is Indole-3-glycerol phosphate synthase of Mycobacterium ulcerans (strain Agy99).